The following is a 261-amino-acid chain: Bcl-2-binding component 3, isoforms 3/4 (261 aa).

Residues 27–261 are disordered; sequence QICGPRERHG…ASAGDFLCTM (235 aa). The segment covering 40 to 50 has biased composition (low complexity); sequence PGGQLPGARRG. The segment covering 53–63 has biased composition (pro residues); the sequence is PRRPAPLPARP. Residues 64–73 are compositionally biased toward low complexity; it reads PGALGSVLRP. Composition is skewed to basic residues over residues 74 to 87 and 95 to 106; these read LRAR…RPHP and RPHRPTRRHRRP. Residues 124–146 are compositionally biased toward low complexity; sequence PGRSSALALAGGAAPGVARAQRP. Positions 147-171 are enriched in gly residues; sequence GGSGGRSHPGGPGSPRGGGTVGPGD. Residues 172-197 are compositionally biased toward low complexity; that stretch reads RGPAAADGGRPQRTVRAAETRGAAAA.

Does not interact with BCL2.

In terms of biological role, does not affect cell growth. The chain is Bcl-2-binding component 3, isoforms 3/4 (BBC3) from Homo sapiens (Human).